We begin with the raw amino-acid sequence, 181 residues long: ATP synthase subunit delta (181 aa).

The protein belongs to the ATPase delta chain family. In terms of assembly, F-type ATPases have 2 components, F(1) - the catalytic core - and F(0) - the membrane proton channel. F(1) has five subunits: alpha(3), beta(3), gamma(1), delta(1), epsilon(1). F(0) has three main subunits: a(1), b(2) and c(10-14). The alpha and beta chains form an alternating ring which encloses part of the gamma chain. F(1) is attached to F(0) by a central stalk formed by the gamma and epsilon chains, while a peripheral stalk is formed by the delta and b chains.

The protein localises to the cell membrane. In terms of biological role, f(1)F(0) ATP synthase produces ATP from ADP in the presence of a proton or sodium gradient. F-type ATPases consist of two structural domains, F(1) containing the extramembraneous catalytic core and F(0) containing the membrane proton channel, linked together by a central stalk and a peripheral stalk. During catalysis, ATP synthesis in the catalytic domain of F(1) is coupled via a rotary mechanism of the central stalk subunits to proton translocation. This protein is part of the stalk that links CF(0) to CF(1). It either transmits conformational changes from CF(0) to CF(1) or is implicated in proton conduction. The chain is ATP synthase subunit delta from Mycoplasma capricolum subsp. capricolum (strain California kid / ATCC 27343 / NCTC 10154).